The following is a 268-amino-acid chain: Acyl-CoA-binding domain-containing protein 4 (268 aa).

The ACB domain occupies 12–101; it reads CQKQFQAAVS…MKLVAQKVID (90 aa). Residues 23 to 32, 43 to 47, Lys-69, and Tyr-88 each bind an acyl-CoA; these read IQNLPKNGSY and YSYYK. Positions 151–175 are disordered; it reads AVSEPPCLPKEPAPPSPESHSPRDL. Pro residues predominate over residues 156 to 167; it reads PCLPKEPAPPSP. 2 positions are modified to phosphoserine: Ser-166 and Ser-171.

In terms of biological role, binds medium- and long-chain acyl-CoA esters and may function as an intracellular carrier of acyl-CoA esters. This Homo sapiens (Human) protein is Acyl-CoA-binding domain-containing protein 4 (ACBD4).